We begin with the raw amino-acid sequence, 1062 residues long: Zinc finger protein swm (1062 aa).

The 69-residue stretch at 7–75 (DKLKDWLSVV…ERLFDAIASE (69 aa)) folds into the PWI domain. Disordered regions lie at residues 119 to 145 (ADSPPPPPKDNVIKPDSNQVKLEQASQ) and 171 to 340 (KPAF…PDRV). Residues 134–145 (DSNQVKLEQASQ) are compositionally biased toward polar residues. A compositionally biased stretch (basic and acidic residues) spans 172 to 182 (PAFDHKTKDSH). Residues 197-207 (SASPPGRSSGV) are compositionally biased toward low complexity. A compositionally biased stretch (gly residues) spans 208 to 220 (SGSGGGGPGGAGL). Basic residues predominate over residues 234–249 (SRRRRASLRSRSRSRS). Basic and acidic residues-rich tracts occupy residues 264–273 (RRVNEREKTQ) and 294–310 (RNFDRRRIGGNADDRPR). Residues 322–340 (RSMSPERNARRNQNSPDRV) are compositionally biased toward polar residues. The C3H1-type zinc-finger motif lies at 363–391 (SHPRQRCRDFDEKGYCVRGETCPWDHGVN). The tract at residues 416 to 463 (EIWARSGGPPPGAGQGPVPPPTQPGQTTINPFSGNVRPTTLMSGSGPS) is disordered. Positions 423–438 (GPPPGAGQGPVPPPTQ) are enriched in pro residues. Over residues 444–461 (INPFSGNVRPTTLMSGSG) the composition is skewed to polar residues. In terms of domain architecture, RRM spans 561 to 635 (SSLELRKVPR…RFIKVFWHND (75 aa)). 5 disordered regions span residues 666 to 704 (NVPAVPTPNADGAKISNANPLTEAGAGNIGTPATEQANT), 716 to 741 (TTTAGGSAGGAAGAGAPGSGRPLNPA), 822 to 847 (QDQLQAQMQQQQQQQQPPVKKTKEQQ), 886 to 920 (SAANNKSTHYAPASGAPGGGAGRKRPNLPEGPTRV), and 1004 to 1062 (APVE…SWRR). Residues 721–733 (GSAGGAAGAGAPG) show a composition bias toward gly residues. Over residues 823 to 840 (DQLQAQMQQQQQQQQPPV) the composition is skewed to low complexity. A compositionally biased stretch (polar residues) spans 1018-1037 (SLENPKQLIQSVSESESLLG). A compositionally biased stretch (acidic residues) spans 1046–1056 (LEDEEEDEESE).

Its subcellular location is the nucleus. Functionally, negatively regulates Hedgehog (hh) protein signal in wing development. Regulates neural-specific glycosylation by binding to FucTA mRNA and facilitating its nuclear export in neural cells. The chain is Zinc finger protein swm from Drosophila melanogaster (Fruit fly).